The chain runs to 219 residues: Probable GTP-binding protein EngB (219 aa).

One can recognise an EngB-type G domain in the interval 26–200; that stretch reads EGVEIAFAGR…RAKLDTWFAP (175 aa). Residues 34–41, 61–65, 79–82, 146–149, and 179–181 each bind GTP; these read GRSNAGKS, GRTQL, DLPG, TKAD, and FSS. Residues Ser41 and Thr63 each contribute to the Mg(2+) site.

It belongs to the TRAFAC class TrmE-Era-EngA-EngB-Septin-like GTPase superfamily. EngB GTPase family. Mg(2+) is required as a cofactor.

Functionally, necessary for normal cell division and for the maintenance of normal septation. In Vibrio parahaemolyticus serotype O3:K6 (strain RIMD 2210633), this protein is Probable GTP-binding protein EngB.